Reading from the N-terminus, the 395-residue chain is S-adenosylmethionine synthase (395 aa).

Residue histidine 14 coordinates ATP. A Mg(2+)-binding site is contributed by aspartate 16. Position 42 (glutamate 42) interacts with K(+). Positions 55 and 98 each coordinate L-methionine. A flexible loop region spans residues 98-108 (QSPDIAMGVNK). Residues 174-176 (DGK), 240-241 (RF), aspartate 249, 255-256 (RK), alanine 272, and lysine 276 each bind ATP. Residue aspartate 249 participates in L-methionine binding. L-methionine is bound at residue lysine 280.

It belongs to the AdoMet synthase family. As to quaternary structure, homotetramer; dimer of dimers. It depends on Mg(2+) as a cofactor. K(+) is required as a cofactor.

It localises to the cytoplasm. It carries out the reaction L-methionine + ATP + H2O = S-adenosyl-L-methionine + phosphate + diphosphate. Its pathway is amino-acid biosynthesis; S-adenosyl-L-methionine biosynthesis; S-adenosyl-L-methionine from L-methionine: step 1/1. Functionally, catalyzes the formation of S-adenosylmethionine (AdoMet) from methionine and ATP. The overall synthetic reaction is composed of two sequential steps, AdoMet formation and the subsequent tripolyphosphate hydrolysis which occurs prior to release of AdoMet from the enzyme. The polypeptide is S-adenosylmethionine synthase (Caldanaerobacter subterraneus subsp. tengcongensis (strain DSM 15242 / JCM 11007 / NBRC 100824 / MB4) (Thermoanaerobacter tengcongensis)).